The primary structure comprises 88 residues: MIAASIKAEVVKDNARAANDTGSPEVQVALLTARINELTPHFKTHAKDHHGRRGLLRMVSRRRKLLDYLKSKDADRYTALIAKLGLRK.

The protein belongs to the universal ribosomal protein uS15 family. As to quaternary structure, part of the 30S ribosomal subunit. Forms a bridge to the 50S subunit in the 70S ribosome, contacting the 23S rRNA.

In terms of biological role, one of the primary rRNA binding proteins, it binds directly to 16S rRNA where it helps nucleate assembly of the platform of the 30S subunit by binding and bridging several RNA helices of the 16S rRNA. Functionally, forms an intersubunit bridge (bridge B4) with the 23S rRNA of the 50S subunit in the ribosome. The polypeptide is Small ribosomal subunit protein uS15 (Variovorax paradoxus (strain S110)).